Consider the following 506-residue polypeptide: bZIP transcription factor TGA10 (506 aa).

Disordered regions lie at residues 22-50 and 113-218; these read VSYMDSSNKNQDPSESNNQISFGGQHQHH and PSSI…KTLR. 4 stretches are compositionally biased toward polar residues: residues 25–45, 113–124, 142–152, and 160–180; these read MDSSNKNQDPSESNNQISFGG, PSSIQEQRQNSG, PSTTNKMNTGL, and SKRSSQPSMELSNNLKNNDAP. Residues 207 to 216 are compositionally biased toward basic and acidic residues; that stretch reads DAPKTPDPKT. The bZIP domain occupies 213–257; that stretch reads DPKTLRRLAQNREAARKSRLRKKAYVQQLESSRIRLTQLEQELQR. The segment at 215 to 235 is basic motif; sequence KTLRRLAQNREAARKSRLRKK. The short motif at 217-224 is the Nuclear localization signal element; it reads LRRLAQNR. The leucine-zipper stretch occupies residues 241–255; sequence LESSRIRLTQLEQEL. Positions 288-502 constitute a DOG1 domain; that stretch reads AAVFDMEYAR…RALSSLWHAR (215 aa).

It belongs to the bZIP family. Binds DNA as a dimer. Interacts with TGA2.2. In terms of tissue distribution, specifically expressed in roots.

The protein localises to the nucleus. In terms of biological role, transcription activator that binds to as1-like elements (5'-TGACGTAAgggaTGACGCA-3') in promoters of target genes. Regulates transcription in response to plant signaling molecules salicylic acid (SA), methyl jasmonate (MJ) and auxin (2,4D) only in leaves. Prevents lateral branching and may repress defense signaling. The chain is bZIP transcription factor TGA10 from Nicotiana tabacum (Common tobacco).